The primary structure comprises 1037 residues: Glycine dehydrogenase (decarboxylating) A, mitochondrial (1037 aa).

A mitochondrion-targeting transit peptide spans 1–66 (MERARRLANK…LNGFGSQVRT (66 aa)). Lys-773 carries the post-translational modification N6-(pyridoxal phosphate)lysine.

Belongs to the GcvP family. Homodimer. The glycine cleavage system is composed of four proteins: P, T, L and H. The cofactor is pyridoxal 5'-phosphate. In terms of tissue distribution, expressed in leaves, stems and roots.

It is found in the mitochondrion. It catalyses the reaction N(6)-[(R)-lipoyl]-L-lysyl-[glycine-cleavage complex H protein] + glycine + H(+) = N(6)-[(R)-S(8)-aminomethyldihydrolipoyl]-L-lysyl-[glycine-cleavage complex H protein] + CO2. Its function is as follows. The glycine cleavage system catalyzes the degradation of glycine. The P protein binds the alpha-amino group of glycine through its pyridoxal phosphate cofactor; CO(2) is released and the remaining methylamine moiety is then transferred to the lipoamide cofactor of the H protein. This is Glycine dehydrogenase (decarboxylating) A, mitochondrial (GDCSPA) from Flaveria pringlei.